Reading from the N-terminus, the 699-residue chain is UvrABC system protein C (699 aa).

Over residues M1 to A51 the composition is skewed to low complexity. Residues M1–V59 are disordered. One can recognise a GIY-YIG domain in the interval T92–V170. The UVR domain occupies R280 to I315.

Belongs to the UvrC family. As to quaternary structure, interacts with UvrB in an incision complex.

It localises to the cytoplasm. Functionally, the UvrABC repair system catalyzes the recognition and processing of DNA lesions. UvrC both incises the 5' and 3' sides of the lesion. The N-terminal half is responsible for the 3' incision and the C-terminal half is responsible for the 5' incision. The sequence is that of UvrABC system protein C from Rhodopseudomonas palustris (strain BisB18).